The chain runs to 583 residues: Aspartate--tRNA ligase (583 aa).

Residue Glu174 coordinates L-aspartate. The tract at residues 198-201 (QITK) is aspartate. Arg220 lines the L-aspartate pocket. ATP-binding positions include 220–222 (RDE) and Gln229. Residue His443 coordinates L-aspartate. ATP is bound at residue Glu477. Residue Arg484 participates in L-aspartate binding. ATP is bound at residue 529–532 (GLDR).

This sequence belongs to the class-II aminoacyl-tRNA synthetase family. Type 1 subfamily. As to quaternary structure, homodimer.

Its subcellular location is the cytoplasm. The catalysed reaction is tRNA(Asp) + L-aspartate + ATP = L-aspartyl-tRNA(Asp) + AMP + diphosphate. Its function is as follows. Catalyzes the attachment of L-aspartate to tRNA(Asp) in a two-step reaction: L-aspartate is first activated by ATP to form Asp-AMP and then transferred to the acceptor end of tRNA(Asp). This chain is Aspartate--tRNA ligase, found in Streptococcus agalactiae serotype III (strain NEM316).